The chain runs to 706 residues: MEHVVDVEFGGKMVTISTGKMAKQANGAVVVKSGDTMVLVTAVAQKEAKEGQDFFPLTVNYTEKAYAGGKIPGSFFRREARPSDPETLTCRLIDRPIRPLFPENFLNDTQIIATVVSADKDHDPRILSMLGASAALEVSDIPFQGPIAGVKVGRVDGRLICNPTADELELSDMEIVVAASRDAIIMVEGEARFVSEDDMLDAIFFGHAAVQPVLEAQEKLKQLAGVAKRDVPPPVVDQALLARVRELASERMSAAVKIKSKQERHNQIDLITAETTASLAAEFEGNEKQIRAFLGDLEYECVRADVLNSGVRIDGRDTVTIRPIATEAGLLPRTHGSALFTRGETQALVVTTLGTSSDEQRMDSLYGEYRKRFLLHYNFPPFSVGETSFRLGPGRREIGHGMLAERALSAILPKHDDFPYTIRIVSETLESNGSSSMAAVCGGCMSLMDAGVPISAPVAGIAMGLIKEGEKVAILSDILGDEDHLGDMDFKVAGSSDGITALQMDIKIGGVTREIMQKALAQAREGRLHILGKMAETLGAPRPEMSSFAPRITTIWVKTDKIRDVIGTGGKNIRNITETTGVTVDIEDTGRINIASTSKEACDLAIQMIRGLTDEAEEGKLYMGIVKKIMDFGAFVEILPGTDGLVHISELDTKRVKTVTEVLNEGDRVLVKCIGVDKNGKVKLSRKEALGLNPDGTPATDAPAGE.

2 residues coordinate Mg(2+): Asp-483 and Asp-489. The KH domain maps to 550-609 (PRITTIWVKTDKIRDVIGTGGKNIRNITETTGVTVDIEDTGRINIASTSKEACDLAIQMI). The S1 motif domain maps to 619 to 687 (GKLYMGIVKK…KNGKVKLSRK (69 aa)).

The protein belongs to the polyribonucleotide nucleotidyltransferase family. Mg(2+) serves as cofactor.

Its subcellular location is the cytoplasm. It catalyses the reaction RNA(n+1) + phosphate = RNA(n) + a ribonucleoside 5'-diphosphate. In terms of biological role, involved in mRNA degradation. Catalyzes the phosphorolysis of single-stranded polyribonucleotides processively in the 3'- to 5'-direction. The chain is Polyribonucleotide nucleotidyltransferase from Pelobacter propionicus (strain DSM 2379 / NBRC 103807 / OttBd1).